Consider the following 515-residue polypeptide: RNA-splicing ligase RtcB homolog (515 aa).

Positions 121, 124, 229, 269, and 363 each coordinate Mn(2+). 228-232 serves as a coordination point for GMP; sequence NHYGE. GMP-binding positions include 363–364, 412–415, Ser-419, 438–441, and Lys-514; these read HN, GGTM, and HGSG. His-438 functions as the GMP-histidine intermediate in the catalytic mechanism.

Belongs to the RtcB family. As to quaternary structure, catalytic component of the tRNA-splicing ligase complex. The cofactor is Mn(2+).

It carries out the reaction a 3'-end 3'-phospho-ribonucleotide-RNA + a 5'-end dephospho-ribonucleoside-RNA + GTP = a ribonucleotidyl-ribonucleotide-RNA + GMP + diphosphate. The enzyme catalyses a 3'-end 2',3'-cyclophospho-ribonucleotide-RNA + a 5'-end dephospho-ribonucleoside-RNA + GTP + H2O = a ribonucleotidyl-ribonucleotide-RNA + GMP + diphosphate + H(+). In terms of biological role, catalytic subunit of the tRNA-splicing ligase complex that acts by directly joining spliced tRNA halves to mature-sized tRNAs by incorporating the precursor-derived splice junction phosphate into the mature tRNA as a canonical 3',5'-phosphodiester. May act as an RNA ligase with broad substrate specificity, and may function toward other RNAs. The protein is RNA-splicing ligase RtcB homolog of Theileria annulata.